Consider the following 608-residue polypeptide: 65-kDa microtubule-associated protein 6 (608 aa).

3 coiled-coil regions span residues 164–186 (DLTL…EKSD), 368–388 (ELLA…QSRK), and 467–503 (VRLV…LLTQ). Positions 501–565 (LTQRESIYGS…RSYSGHHRQN (65 aa)) are disordered. Positions 510–523 (SKPSPRRSSSFRKP) are enriched in low complexity. A Phosphoserine modification is found at Ser-513. A compositionally biased stretch (polar residues) spans 526–535 (FNISNGNGSV). At Ser-604 the chain carries Phosphoserine.

This sequence belongs to the MAP65/ASE1 family. As to quaternary structure, forms a dimer. Binds to polymerized centrally located endocytic MT.

The protein localises to the nucleus. It is found in the cytoplasm. It localises to the mitochondrion. Its subcellular location is the cytoskeleton. The protein resides in the phragmoplast. Functionally, microtubule-associated protein that mediates the formation of a mesh-like stable and dense network formed by individual microtubules (MT). Confers MT resistance to high concentration of NaCl. The polypeptide is 65-kDa microtubule-associated protein 6 (MAP65-6) (Arabidopsis thaliana (Mouse-ear cress)).